Reading from the N-terminus, the 468-residue chain is Probable ubiquitin carboxyl-terminal hydrolase R319 (468 aa).

Residues 42 to 462 (TGIMNLGNTC…NAYILFYIRS (421 aa)) form the USP domain. Catalysis depends on Cys-51, which acts as the Nucleophile. His-420 (proton acceptor) is an active-site residue.

This sequence belongs to the peptidase C19 family.

It catalyses the reaction Thiol-dependent hydrolysis of ester, thioester, amide, peptide and isopeptide bonds formed by the C-terminal Gly of ubiquitin (a 76-residue protein attached to proteins as an intracellular targeting signal).. The protein is Probable ubiquitin carboxyl-terminal hydrolase R319 of Acanthamoeba polyphaga (Amoeba).